We begin with the raw amino-acid sequence, 710 residues long: Solute carrier organic anion transporter family member 3A1 (710 aa).

At Met-1 the chain carries N-acetylmethionine. The segment covering 1–15 (MQGKKPGGSSGGGRS) has biased composition (gly residues). Residues 1–25 (MQGKKPGGSSGGGRSGELQGDEAQR) are disordered. Topologically, residues 1-40 (MQGKKPGGSSGGGRSGELQGDEAQRNKKKKKKVSCFSNIK) are cytoplasmic. Residues 41-60 (IFLVSECALMLAQGTVGAYL) traverse the membrane as a helical segment. Residues 61–79 (VSVLTTLERRFNLQSADVG) are Extracellular-facing. The helical transmembrane segment at 80 to 100 (VIASSFEIGNLALILFVSYFG) threads the bilayer. Topologically, residues 101-106 (ARGHRP) are cytoplasmic. The chain crosses the membrane as a helical span at residues 107-131 (RLIGCGGIVMALGALLSALPEFLTH). Residues 132-174 (QYKYEAGEIRWGAEGRDVCAANGSGGDEGPDPDLICRNRTATN) lie on the Extracellular side of the membrane. N-linked (GlcNAc...) asparagine glycans are attached at residues Asn-153 and Asn-169. The helical transmembrane segment at 175–203 (MMYLLLIGAQVLLGIGATPVQPLGVSYID) threads the bilayer. The Cytoplasmic portion of the chain corresponds to 204–222 (DHVRRKDSSLYIGILFTML). The chain crosses the membrane as a helical span at residues 223–243 (VFGPACGFILGSFCTKIYVDA). The Extracellular portion of the chain corresponds to 244 to 261 (VFIDTSNLDITPDDPRWI). The helical transmembrane segment at 262-286 (GAWWGGFLLCGALLFFSSLLMFGFP) threads the bilayer. At 287-344 (QSLPPHSEPAMESEQAMLSEREYERPKPSNGVLRHPLEPDSSASCFQQLRVIPKVTKH) the chain is on the cytoplasmic side. The chain crosses the membrane as a helical span at residues 345–366 (LLSNPVFTCIILAACMEIAVVA). At 367 to 386 (GFAAFLGKYLEQQFNLTTSS) the chain is on the extracellular side. An N-linked (GlcNAc...) asparagine glycan is attached at Asn-381. The chain crosses the membrane as a helical span at residues 387–410 (ANQLLGMTAIPCACLGIFLGGLLV). At 411–414 (KKLS) the chain is on the cytoplasmic side. The chain crosses the membrane as a helical span at residues 415–438 (LSALGAIRMAMLVNLVSTACYVSF). Topologically, residues 439–539 (LFLGCDTGPV…PGCQEAFLTF (101 aa)) are extracellular. Residue Asn-457 is glycosylated (N-linked (GlcNAc...) asparagine). In terms of domain architecture, Kazal-like spans 465–513 (LDPYSPCNNNCECQTDSFTPVCGADGITYLSACFAGCNSTNLTGCACLT). 3 disulfide bridges follow: Cys-471–Cys-501, Cys-477–Cys-497, and Cys-486–Cys-511. N-linked (GlcNAc...) asparagine glycans are attached at residues Asn-502, Asn-505, and Asn-519. Residues 540–562 (LCVMCICSLIGAMAQTPSVIILI) traverse the membrane as a helical segment. At 563-571 (RTVSPELKS) the chain is on the cytoplasmic side. The chain crosses the membrane as a helical span at residues 572-597 (YALGVLFLLLRLLGFIPPPLIFGAGI). Residues 598 to 630 (DSTCLFWSTFCGEQGACVLYDNVVYRYLYVSIA) lie on the Extracellular side of the membrane. Residues 631–648 (IALKSFAFILYTTTWQCL) traverse the membrane as a helical segment. Residues 649 to 705 (RKNYKRYIKNHEGGLSTSEFFASTLTLDNLGRDPVPANQTHRTKFIYNLEDHEWCEN) lie on the Cytoplasmic side of the membrane.

The protein belongs to the organo anion transporter (TC 2.A.60) family. In terms of tissue distribution, generally the expression of isoform 1 is higher than that of isoform 2. Expressed in placental trophoblasts. Expressed in pancreas, kidney, liver, lung, brain, heart, cerebellum, peripheral blood leukocyte, colon, small intestine, ovary, testis, prostate, thyroid, thymus and spleen. Expressed in fetal brain, heart, kidney, liver, lung, skeletal muscle, spleen and pancreas. In testis, detected in spermatogonia at different stages and absent from Sertoli cells. Expressed in the choroid plexus epithelium, at the basolateral membrane. In brain, also very abundant in the gray matter of the frontal cortex, but not associated with neuronal cell bodies. Not detected in the white matter. As to expression, expressed in heart, brain, cerebellum, testis, lung, thyroid, spoleen and liver. In testis, primarily localized to the basal membrane of Sertoli cells and weakly expressed within the tubules. In testis, also present in spermatogonia at different stages. In brain, expressed in the choroid plexus epithelium, at the apical membrane as well as in the subapical intracellular vesicular compartments. In brain, also associated with neuronal bodies and axons in both the gray and the white matters of the frontal cortex.

It localises to the basolateral cell membrane. The protein localises to the apical cell membrane. It is found in the basal cell membrane. The catalysed reaction is L-thyroxine(out) = L-thyroxine(in). The enzyme catalyses prostaglandin E1(out) = prostaglandin E1(in). It carries out the reaction prostaglandin E2(out) = prostaglandin E2(in). It catalyses the reaction prostaglandin F2alpha(out) = prostaglandin F2alpha(in). The catalysed reaction is (5Z,8Z,11Z,14Z)-eicosatetraenoate(out) = (5Z,8Z,11Z,14Z)-eicosatetraenoate(in). The enzyme catalyses taurocholate(out) = taurocholate(in). It carries out the reaction glycocholate(out) = glycocholate(in). It catalyses the reaction estrone 3-sulfate(out) = estrone 3-sulfate(in). The catalysed reaction is argipressin(out) = argipressin(in). With respect to regulation, stimulated by extracellular acidic pH. In terms of biological role, putative organic anion antiporter with apparent broad substrate specificity. Recognizes various substrates including thyroid hormone L-thyroxine, prostanoids such as prostaglandin E1 and E2, bile acids such as taurocholate, glycolate and glycochenodeoxycholate and peptide hormones such as L-arginine vasopressin, likely operating in a tissue-specific manner. The transport mechanism, its electrogenicity and potential tissue-specific counterions remain to be elucidated. The sequence is that of Solute carrier organic anion transporter family member 3A1 (SLCO3A1) from Homo sapiens (Human).